The chain runs to 205 residues: Holliday junction branch migration complex subunit RuvA (205 aa).

Positions 1-64 are domain I; sequence MIGRIRGLLV…EDAQLLYGFI (64 aa). Residues 65 to 143 are domain II; sequence SKQERALFRL…SLMEASVGSE (79 aa). Positions 144-156 are flexible linker; it reads REFMLQSNYTAPV. Residues 157 to 205 are domain III; the sequence is VANTAEEDAIAALLSLGYKPAQASKAVSAVYVDGIDSESLIKSALKSML.

The protein belongs to the RuvA family. As to quaternary structure, homotetramer. Forms an RuvA(8)-RuvB(12)-Holliday junction (HJ) complex. HJ DNA is sandwiched between 2 RuvA tetramers; dsDNA enters through RuvA and exits via RuvB. An RuvB hexamer assembles on each DNA strand where it exits the tetramer. Each RuvB hexamer is contacted by two RuvA subunits (via domain III) on 2 adjacent RuvB subunits; this complex drives branch migration. In the full resolvosome a probable DNA-RuvA(4)-RuvB(12)-RuvC(2) complex forms which resolves the HJ.

It localises to the cytoplasm. In terms of biological role, the RuvA-RuvB-RuvC complex processes Holliday junction (HJ) DNA during genetic recombination and DNA repair, while the RuvA-RuvB complex plays an important role in the rescue of blocked DNA replication forks via replication fork reversal (RFR). RuvA specifically binds to HJ cruciform DNA, conferring on it an open structure. The RuvB hexamer acts as an ATP-dependent pump, pulling dsDNA into and through the RuvAB complex. HJ branch migration allows RuvC to scan DNA until it finds its consensus sequence, where it cleaves and resolves the cruciform DNA. The sequence is that of Holliday junction branch migration complex subunit RuvA from Shewanella piezotolerans (strain WP3 / JCM 13877).